The chain runs to 872 residues: Armadillo repeat-containing protein 3 (872 aa).

ARM repeat units follow at residues 15–54 (DVFD…KFAL), 57–96 (EENK…ILAS), 98–138 (NDVK…NMSA), 140–179 (YTSK…NLVQ), 181–220 (FQCR…VIAN), 222–262 (KESR…NCLE), 264–304 (MDTM…KAAY), 306–345 (PENR…AMCE), 346–385 (NSGS…NLTT), 388–427 (PANA…NMAM), 429–468 (EPLR…ATAC), and 470–509 (VEAR…VCAG). 2 S-palmitoyl cysteine lipidation sites follow: cysteine 507 and cysteine 518. A disordered region spans residues 610-693 (VSPPSSMEDK…SKGKKEEEKV (84 aa)). Positions 626-635 (RSISSSSSLR) are enriched in low complexity. The segment covering 636-646 (RSSKEKNKKNS) has biased composition (basic residues). Residues 675 to 693 (ATKEKGWRKSKGKKEEEKV) are compositionally biased toward basic and acidic residues.

Homodimer. Interacts with PIK3C3, PIK3R4 and BECN1. Interacts (via ARM domains) with ATG14. Palmitoylation is important for its function in autophagy. As to expression, expressed in skeletal muscle, brain, lung, kidney, prostate and testis. Mainly expressed in skeletal muscle, liver, spleen and thymus. In terms of tissue distribution, expressed only in the testis among normal tissues but is expressed frequently in various cancer tissues and, particularly, in pancreatic, lung and endometrial cancers.

In terms of biological role, essential for male fertility and sperm motility. During spermatogenesis, promotes the autophagic degradation of excessive ribosomes, providing energy resources for mitochondria and thus ensuring sperm flagellar motility. This chain is Armadillo repeat-containing protein 3 (ARMC3), found in Homo sapiens (Human).